Here is an 89-residue protein sequence, read N- to C-terminus: Putative defensin-like protein 89 (89 aa).

Positions 1-25 (MGFKNNLSLVSVMVFALILLPMISG) are cleaved as a signal peptide. 4 disulfide bridges follow: cysteine 30-cysteine 66, cysteine 36-cysteine 57, cysteine 42-cysteine 64, and cysteine 46-cysteine 65.

It belongs to the DEFL family.

It is found in the secreted. The protein is Putative defensin-like protein 89 of Arabidopsis thaliana (Mouse-ear cress).